A 227-amino-acid polypeptide reads, in one-letter code: Mediator of RNA polymerase II transcription subunit 18 (227 aa).

The protein belongs to the Mediator complex subunit 18 family. As to quaternary structure, component of the Mediator complex.

Its subcellular location is the nucleus. In terms of biological role, component of the Mediator complex, a coactivator involved in the regulated transcription of nearly all RNA polymerase II-dependent genes. Mediator functions as a bridge to convey information from gene-specific regulatory proteins to the basal RNA polymerase II transcription machinery. Mediator is recruited to promoters by direct interactions with regulatory proteins and serves as a scaffold for the assembly of a functional preinitiation complex with RNA polymerase II and the general transcription factors. This chain is Mediator of RNA polymerase II transcription subunit 18 (mdt-18), found in Caenorhabditis briggsae.